We begin with the raw amino-acid sequence, 303 residues long: tRNA dimethylallyltransferase (303 aa).

12-19 (GTTASGKS) lines the ATP pocket. 14-19 (TASGKS) is a binding site for substrate. Residues 37-40 (DSRQ) form an interaction with substrate tRNA region.

Belongs to the IPP transferase family. In terms of assembly, monomer. It depends on Mg(2+) as a cofactor.

The enzyme catalyses adenosine(37) in tRNA + dimethylallyl diphosphate = N(6)-dimethylallyladenosine(37) in tRNA + diphosphate. Its function is as follows. Catalyzes the transfer of a dimethylallyl group onto the adenine at position 37 in tRNAs that read codons beginning with uridine, leading to the formation of N6-(dimethylallyl)adenosine (i(6)A). In Synechocystis sp. (strain ATCC 27184 / PCC 6803 / Kazusa), this protein is tRNA dimethylallyltransferase.